Consider the following 746-residue polypeptide: Histone-lysine N-methyltransferase EZH2 (746 aa).

Residues 1–340 (MGQTGKKSEK…AKEFAAALTA (340 aa)) are interaction with DNMT1, DNMT3A and DNMT3B. Residue serine 21 is modified to Phosphoserine; by PKB/AKT1. The tract at residues 39–68 (KTMFSSNRQKILERTETLNQEWKQRRIQPV) is interaction with EED. A glycan (O-linked (GlcNAc) serine) is linked at serine 75. Serine 76 carries the phosphoserine modification. Residues 180–217 (QYNDDDDDDDGDDPDEREEKQKDLEDNRDDKETCPPRK) form a disordered region. Residues 182–195 (NDDDDDDDGDDPDE) show a composition bias toward acidic residues. Basic and acidic residues predominate over residues 196 to 217 (REEKQKDLEDNRDDKETCPPRK). Residues 329–522 (EGAKEFAAAL…SSNHVYNYQP (194 aa)) are interaction with CDYL. Threonine 339 is modified (phosphothreonine). Positions 340 to 426 (AERIKTPPKR…PIKMKPNIEP (87 aa)) are disordered. A Phosphothreonine; by CDK1 and CDK2 modification is found at threonine 345. The segment covering 345 to 357 (TPPKRPGGRRRGR) has biased composition (basic residues). Phosphoserine occurs at positions 363 and 366. Threonine 367 carries the phosphothreonine modification. The span at 374–385 (ESKDTDSDREAG) shows a compositional bias: basic and acidic residues. Threonine 487 is subject to Phosphothreonine. The region spanning 503–605 (CRKIQLKKDG…SKNVSCKNCS (103 aa)) is the CXC domain. The SET domain occupies 612–727 (KHLLLAPSDV…TGEELFFDYR (116 aa)). Lysine 634 participates in a covalent cross-link: Glycyl lysine isopeptide (Lys-Gly) (interchain with G-Cter in SUMO2).

It belongs to the class V-like SAM-binding methyltransferase superfamily. Histone-lysine methyltransferase family. EZ subfamily. Component of the PRC2/EED-EZH2 complex, which includes EED, EZH2, SUZ12, RBBP4 and RBBP7 and possibly AEBP2. The minimum components required for methyltransferase activity of the PRC2/EED-EZH2 complex are EED, EZH2 and SUZ12. The PRC2 complex may also interact with DNMT1, DNMT3A, DNMT3B and PHF1 via the EZH2 subunit and with SIRT1 via the SUZ12 subunit. Interacts with HDAC1 and HDAC2. Binds ATRX via the SET domain. Interacts with PRAME. Interacts with CDYL. Interacts with EED. Interacts with BMAL1. Interacts with CLOCK and CRY1. Interacts with DNMT3L; the interaction is direct. Interacts with EZHIP; the interaction blocks EZH2 methyltransferase activity. Interacts with ZNF263; recruited to the SIX3 promoter along with other proteins involved in chromatin modification and transcriptional corepression where it contributes to transcriptional repression. Interacts with ARMC12. Interacts with ZMYND8; the interaction is dependent on the presence of chromatin. Interacts with DDX18; this interaction inhibits the PRC2 complex. Post-translationally, phosphorylated by AKT1. Phosphorylation by AKT1 reduces methyltransferase activity. Phosphorylation at Thr-345 by CDK1 and CDK2 promotes maintenance of H3K27me3 levels at EZH2-target loci, thus leading to epigenetic gene silencing. Sumoylated. In terms of processing, glycosylated: O-GlcNAcylation at Ser-75 by OGT increases stability of EZH2 and facilitates the formation of H3K27me3 by the PRC2/EED-EZH2 complex. Present in actively dividing cells. Widely expressed in early embryos. In later embryogenesis, expression restricted to central and peripheral nervous system, liver and thymus. In adult, highest expression in spleen, testis and placenta. Lower levels in intestine, muscle and ovary and very low levels in brain and liver. No expression in heart, thyroid gland, lung and kidney.

Its subcellular location is the nucleus. The protein resides in the chromosome. The enzyme catalyses L-lysyl(27)-[histone H3] + 3 S-adenosyl-L-methionine = N(6),N(6),N(6)-trimethyl-L-lysyl(27)-[histone H3] + 3 S-adenosyl-L-homocysteine + 3 H(+). Polycomb group (PcG) protein. Catalytic subunit of the PRC2/EED-EZH2 complex, which methylates (H3K9me) and 'Lys-27' (H3K27me) of histone H3, leading to transcriptional repression of the affected target gene. Able to mono-, di- and trimethylate 'Lys-27' of histone H3 to form H3K27me1, H3K27me2 and H3K27me3, respectively. Displays a preference for substrates with less methylation, loses activity when progressively more methyl groups are incorporated into H3K27, H3K27me0 &gt; H3K27me1 &gt; H3K27me2. Compared to EZH1-containing complexes, it is more abundant in embryonic stem cells and plays a major role in forming H3K27me3, which is required for embryonic stem cell identity and proper differentiation. The PRC2/EED-EZH2 complex may also serve as a recruiting platform for DNA methyltransferases, thereby linking two epigenetic repression systems. Genes repressed by the PRC2/EED-EZH2 complex include HOXA7, HOXB6 and HOXC8. EZH2 can also methylate non-histone proteins such as the transcription factor GATA4 and the nuclear receptor RORA. Regulates the circadian clock via histone methylation at the promoter of the circadian genes. Essential for the CRY1/2-mediated repression of the transcriptional activation of PER1/2 by the CLOCK-BMAL1 heterodimer; involved in the di and trimethylation of 'Lys-27' of histone H3 on PER1/2 promoters which is necessary for the CRY1/2 proteins to inhibit transcription. The polypeptide is Histone-lysine N-methyltransferase EZH2 (Mus musculus (Mouse)).